Reading from the N-terminus, the 305-residue chain is Superkiller complex protein 8 (305 aa).

An N-acetylmethionine modification is found at M1. N-acetylthreonine; in WD repeat-containing protein 61, N-terminally processed is present on T2. 7 WD repeats span residues 14-57, 62-101, 104-143, 146-187, 188-227, 230-269, and 272-305; these read AHDD…LELQ, GHQL…QMKS, AGPV…KEYS, TRGK…HTLE, GHAM…LAGT, GHAS…CIHT, and DHQD…DCPI.

Belongs to the SKI8 family. Component of the PAF1 complex, which consists of CDC73, PAF1, LEO1, CTR9, RTF1 and SKIC8. The PAF1 complex interacts with PHF5A. Within the PAF1 complex interacts directly with PHF5A. Component of the SKI complex which consists of SKIC2, SKIC3 and SKIC8.

It is found in the nucleus. The protein resides in the cytoplasm. Functionally, component of the PAF1 complex (PAF1C) which has multiple functions during transcription by RNA polymerase II and is implicated in regulation of development and maintenance of embryonic stem cell pluripotency. PAF1C associates with RNA polymerase II through interaction with POLR2A CTD non-phosphorylated and 'Ser-2'- and 'Ser-5'-phosphorylated forms and is involved in transcriptional elongation, acting both independently and synergistically with TCEA1 and in cooperation with the DSIF complex and HTATSF1. PAF1C is required for transcription of Hox and Wnt target genes. PAF1C is involved in hematopoiesis and stimulates transcriptional activity of KMT2A/MLL1; it promotes leukemogenesis through association with KMT2A/MLL1-rearranged oncoproteins, such as KMT2A/MLL1-MLLT3/AF9 and KMT2A/MLL1-MLLT1/ENL. PAF1C is involved in histone modifications such as ubiquitination of histone H2B and methylation on histone H3 'Lys-4' (H3K4me3). PAF1C recruits the RNF20/40 E3 ubiquitin-protein ligase complex and the E2 enzyme UBE2A or UBE2B to chromatin which mediate monoubiquitination of 'Lys-120' of histone H2B (H2BK120ub1); UB2A/B-mediated H2B ubiquitination is proposed to be coupled to transcription. PAF1C is involved in mRNA 3' end formation probably through association with cleavage and poly(A) factors. In case of infection by influenza A strain H3N2, PAF1C associates with viral NS1 protein, thereby regulating gene transcription. Required for mono- and trimethylation on histone H3 'Lys-4' (H3K4me3), dimethylation on histone H3 'Lys-79' (H3K4me3). Required for Hox gene transcription. Also acts as a component of the SKI complex, a multiprotein complex that assists the RNA-degrading exosome during the mRNA decay and quality-control pathways. The SKI complex catalyzes mRNA extraction from 80S ribosomal complexes in the 3'-5' direction and channels mRNA to the cytosolic exosome for degradation. SKI-mediated extraction of mRNA from stalled ribosomes allow binding of the Pelota-HBS1L complex and subsequent ribosome disassembly by ABCE1 for ribosome recycling. The protein is Superkiller complex protein 8 (Skic8) of Mus musculus (Mouse).